Reading from the N-terminus, the 111-residue chain is Iron-sulfur cluster insertion protein ErpA (111 aa).

Iron-sulfur cluster-binding residues include Cys-39, Cys-103, and Cys-105.

Belongs to the HesB/IscA family. As to quaternary structure, homodimer. Requires iron-sulfur cluster as cofactor.

Required for insertion of 4Fe-4S clusters for at least IspG. The sequence is that of Iron-sulfur cluster insertion protein ErpA from Acinetobacter baumannii (strain AB307-0294).